The chain runs to 291 residues: Bifunctional protein FolD (291 aa).

NADP(+) is bound by residues 166–168 (GAS) and Ile-232.

It belongs to the tetrahydrofolate dehydrogenase/cyclohydrolase family. Homodimer.

It carries out the reaction (6R)-5,10-methylene-5,6,7,8-tetrahydrofolate + NADP(+) = (6R)-5,10-methenyltetrahydrofolate + NADPH. It catalyses the reaction (6R)-5,10-methenyltetrahydrofolate + H2O = (6R)-10-formyltetrahydrofolate + H(+). It functions in the pathway one-carbon metabolism; tetrahydrofolate interconversion. Catalyzes the oxidation of 5,10-methylenetetrahydrofolate to 5,10-methenyltetrahydrofolate and then the hydrolysis of 5,10-methenyltetrahydrofolate to 10-formyltetrahydrofolate. The chain is Bifunctional protein FolD from Photorhabdus laumondii subsp. laumondii (strain DSM 15139 / CIP 105565 / TT01) (Photorhabdus luminescens subsp. laumondii).